A 167-amino-acid chain; its full sequence is Homing endonuclease I-ApeII (167 aa).

This sequence belongs to the LAGLIDADG endonuclease family.

Endonuclease involved in rRNA intron I-gamma homing. This is Homing endonuclease I-ApeII (apeII) from Aeropyrum pernix (strain ATCC 700893 / DSM 11879 / JCM 9820 / NBRC 100138 / K1).